The chain runs to 189 residues: Dual-action ribosomal maturation protein DarP (189 aa).

The segment at Met-1–Arg-22 is disordered.

This sequence belongs to the DarP family.

The protein localises to the cytoplasm. Functionally, member of a network of 50S ribosomal subunit biogenesis factors which assembles along the 30S-50S interface, preventing incorrect 23S rRNA structures from forming. Promotes peptidyl transferase center (PTC) maturation. This chain is Dual-action ribosomal maturation protein DarP, found in Xylella fastidiosa (strain Temecula1 / ATCC 700964).